A 267-amino-acid polypeptide reads, in one-letter code: Glutamate racemase (267 aa).

Residues 9-10 and 41-42 each bind substrate; these read DS and YS. C73 serves as the catalytic Proton donor/acceptor. Substrate is bound at residue 74-75; it reads NT. Catalysis depends on C184, which acts as the Proton donor/acceptor. 185–186 is a substrate binding site; the sequence is TH.

Belongs to the aspartate/glutamate racemases family.

The catalysed reaction is L-glutamate = D-glutamate. It functions in the pathway cell wall biogenesis; peptidoglycan biosynthesis. In terms of biological role, provides the (R)-glutamate required for cell wall biosynthesis. The polypeptide is Glutamate racemase (Glaesserella parasuis serovar 5 (strain SH0165) (Haemophilus parasuis)).